The chain runs to 323 residues: MSDIVVDDFSEKQAARLNKLSKRLHREVGKAIADYQMIEEGDRIMCCLSGGKDSYAMLDILLNLQKRAPISFEIVAVNLDQKQPGFPEHILPAYLDNLGVAYHILEKDTYSIVKEKIPEGKTTCSLCSRLRRGTLYGFAQRIGATKIALGHHRDDIIETLFLNMFFAGKMKAMPPKLLSDDGANMVIRPLAYCREKDIAEYAKFKEFPIIPCNLCGSQENLKRGAVKDMLKQWDKHHPGRIESIFTAMQNTSPSQGVDREQFDFAGLTRDPDAPMRGDVAESDLPAFDFLDTSNSGHIDLDAAKARSDLLSQQRIDIVSSYKP.

The PP-loop motif motif lies at 49–54; that stretch reads SGGKDS. [4Fe-4S] cluster-binding residues include C124, C127, and C215.

Belongs to the TtcA family. Homodimer. It depends on Mg(2+) as a cofactor. The cofactor is [4Fe-4S] cluster.

The protein localises to the cytoplasm. The enzyme catalyses cytidine(32) in tRNA + S-sulfanyl-L-cysteinyl-[cysteine desulfurase] + AH2 + ATP = 2-thiocytidine(32) in tRNA + L-cysteinyl-[cysteine desulfurase] + A + AMP + diphosphate + H(+). Its pathway is tRNA modification. Its function is as follows. Catalyzes the ATP-dependent 2-thiolation of cytidine in position 32 of tRNA, to form 2-thiocytidine (s(2)C32). The sulfur atoms are provided by the cysteine/cysteine desulfurase (IscS) system. The protein is tRNA-cytidine(32) 2-sulfurtransferase of Shewanella denitrificans (strain OS217 / ATCC BAA-1090 / DSM 15013).